Reading from the N-terminus, the 155-residue chain is Endoribonuclease YbeY (155 aa).

Zn(2+)-binding residues include His-120, His-124, and His-130.

This sequence belongs to the endoribonuclease YbeY family. The cofactor is Zn(2+).

It is found in the cytoplasm. In terms of biological role, single strand-specific metallo-endoribonuclease involved in late-stage 70S ribosome quality control and in maturation of the 3' terminus of the 16S rRNA. The sequence is that of Endoribonuclease YbeY from Staphylococcus epidermidis (strain ATCC 12228 / FDA PCI 1200).